A 327-amino-acid polypeptide reads, in one-letter code: MPHLAELVAKARTAIEEAQDVAALENVRVEYLGKKGHLTLQMTSLRELPAEERPAAGAVINQAKQDVQDALNARKHTLESAELNARLAQETIDVSLPGRTIENGGLHPVTRTIDRIETFFGELGFSVVTGPEIEDDYHNFDALNIPGHHPARADHDTFWFDATRLLRTQTSGVQIRTMEKQQPPIRIIAPGRVYRNDYDQTHTPMFHQMEGLIVDKDISFTNLKGTLHDFLRNFFEEDLQVRFRPSYFPFTEPSAEVDVMGKNGKWLEVLGCGMVHPNVLRNVGIDPEVYSGFAFGMGMERLTMLRYGVTDLRAFFENDLRFLKQFK.

A Mg(2+)-binding site is contributed by E252.

Belongs to the class-II aminoacyl-tRNA synthetase family. Phe-tRNA synthetase alpha subunit type 1 subfamily. In terms of assembly, tetramer of two alpha and two beta subunits. It depends on Mg(2+) as a cofactor.

It localises to the cytoplasm. It carries out the reaction tRNA(Phe) + L-phenylalanine + ATP = L-phenylalanyl-tRNA(Phe) + AMP + diphosphate + H(+). This chain is Phenylalanine--tRNA ligase alpha subunit, found in Pectobacterium carotovorum subsp. carotovorum (strain PC1).